Reading from the N-terminus, the 875-residue chain is Phospholipase DDHD1 (875 aa).

Disordered regions lie at residues 1–30 (MNYP…LGSD), 101–153 (LRYY…GAAA), and 206–231 (RAQD…SVED). Ser8 and Ser11 each carry phosphoserine. The span at 130–140 (SGGGGAAGGGP) shows a compositional bias: gly residues. Over residues 217-228 (GPASPAGPASSS) the composition is skewed to low complexity. The active site involves Ser540. The DDHD domain occupies 614 to 861 (LKFKVENFFC…ALFLLTFMYK (248 aa)). Ser726 is subject to Phosphoserine. Positions 770–804 (RSSASQPSETSRDSIEDEKKPVASPPMTTVATQTL) are disordered. Residues 779 to 790 (TSRDSIEDEKKP) show a composition bias toward basic and acidic residues. A compositionally biased stretch (polar residues) spans 795-804 (PMTTVATQTL).

Belongs to the PA-PLA1 family. As to quaternary structure, forms homooligomers and, to a much smaller extent, heterooligomers with DDHD2. Interacts with SEC23A and SEC24C. In terms of tissue distribution, expressed in mature testis.

It is found in the cytoplasm. It catalyses the reaction a 1,2-diacyl-sn-glycero-3-phosphate + H2O = a 2-acyl-sn-glycerol 3-phosphate + a fatty acid + H(+). The catalysed reaction is a 1,2-diacyl-sn-glycero-3-phospho-(1D-myo-inositol) + H2O = a 2-acyl-sn-glycero-3-phospho-D-myo-inositol + a fatty acid + H(+). It carries out the reaction 1-octadecanoyl-2-(5Z,8Z,11Z,14Z-eicosatetraenoyl)-sn-glycero-3-phospho-(1D-myo-inositol) + H2O = 2-(5Z,8Z,11Z,14Z-eicosatetraenoyl)-sn-glycero-3-phospho-(1D-myo-inositol) + octadecanoate + H(+). The enzyme catalyses a 1-acyl-2-(5Z,8Z,11Z,14Z-eicosatetraenoyl)-sn-glycero-3-phospho-(1D-myo-inositol) + H2O = 2-(5Z,8Z,11Z,14Z-eicosatetraenoyl)-sn-glycero-3-phospho-(1D-myo-inositol) + a fatty acid + H(+). It catalyses the reaction 1,2-dihexadecanoyl-sn-glycero-3-phospho-(1D-myo-inositol) + H2O = 2-hexadecanoyl-sn-glycero-3-phospho-(1D-myo-inositol) + hexadecanoate + H(+). The catalysed reaction is 1,2-di-(9Z-octadecenoyl)-sn-glycero-3-phosphate + H2O = 2-(9Z-octadecenoyl)-sn-glycero-3-phosphate + (9Z)-octadecenoate + H(+). It carries out the reaction a 1-acyl-2-(5Z,8Z,11Z,14Z)-eicosatetraenoyl-sn-glycero-3-phosphate + H2O = 2-(5Z,8Z,11Z,14Z-eicosatetraenoyl)-sn-glycero-3-phosphate + a fatty acid + H(+). The enzyme catalyses 1-hexadecanoyl-2-(9Z-octadecenoyl)-sn-glycero-3-phosphate + H2O = 2-(9Z-octadecenoyl)-sn-glycero-3-phosphate + hexadecanoate + H(+). It catalyses the reaction 1-hexadecanoyl-2-(9Z-octadecenoyl)-sn-glycero-3-phospho-L-serine + H2O = 2-(9Z-octadecenoyl)-sn-glycero-3-phospho-L-serine + hexadecanoate + H(+). The catalysed reaction is 1,2-di-(5Z,8Z,11Z,14Z)-eicosatetraenoyl-sn-glycero-3-phosphate + H2O = 2-(5Z,8Z,11Z,14Z-eicosatetraenoyl)-sn-glycero-3-phosphate + (5Z,8Z,11Z,14Z)-eicosatetraenoate + H(+). It carries out the reaction 1-octadecanoyl-2-(5Z,8Z,11Z,14Z-eicosatetraenoyl)-sn-glycero-3-phosphate + H2O = 2-(5Z,8Z,11Z,14Z-eicosatetraenoyl)-sn-glycero-3-phosphate + octadecanoate + H(+). The enzyme catalyses a 1,2-diacyl-sn-glycero-3-phosphocholine + H2O = a 2-acyl-sn-glycero-3-phosphocholine + a fatty acid + H(+). It catalyses the reaction a 1,2-diacyl-sn-glycero-3-phosphoethanolamine + H2O = a 2-acyl-sn-glycero-3-phosphoethanolamine + a fatty acid + H(+). The catalysed reaction is a 1,2-diacyl-sn-glycero-3-phospho-L-serine + H2O = a 2-acyl-sn-glycero-3-phospho-L-serine + a fatty acid + H(+). It carries out the reaction a 1,2-diacyl-sn-glycero-3-phospho-(1'-sn-glycerol) + H2O = 2-acyl-sn-glycero-3-phospho-(1'-sn-glycerol) + a fatty acid + H(+). The enzyme catalyses 1-hexadecanoyl-2-(9Z-octadecenoyl)-sn-glycero-3-phospho-(1'-sn-glycerol) + H2O = 2-(9Z-octadecenoyl)-sn-glycero-3-phospho-(1'-sn-glycerol) + hexadecanoate + H(+). It catalyses the reaction 1-acyl-2-(5Z,8Z,11Z,14Z-eicosatetraenoyl)-sn-glycero-3-phosphocholine + H2O = 2-(5Z,8Z,11Z,14Z)-eicosatetraenoyl-sn-glycero-3-phosphocholine + a fatty acid + H(+). The catalysed reaction is 1-acyl-2-(5Z,8Z,11Z,14Z)-eicosatetraenoyl-sn-glycero-3-phosphoethanolamine + H2O = 2-(5Z,8Z,11Z,14Z)-eicosatetraenoyl-sn-glycero-3-phosphoethanolamine + a fatty acid + H(+). It carries out the reaction 1-(9Z-octadecenoyl)-2-(7Z,10Z,13Z,16Z,19Z-docosapentaenoyl)-sn-glycero-3-phospho-1D-myo-inositol + H2O = 2-(7Z,10Z,13Z,16Z,19Z-docosapentaenoyl)-sn-glycero-3-phospho-1D-myo-inositol + (9Z)-octadecenoate + H(+). The enzyme catalyses 1-(9Z-octadecenoyl)-2-(5Z,8Z,11Z,14Z-eicosatetraenoyl)-sn-glycero-3-phospho-1D-myo-inositol + H2O = 2-(5Z,8Z,11Z,14Z-eicosatetraenoyl)-sn-glycero-3-phospho-(1D-myo-inositol) + (9Z)-octadecenoate + H(+). It catalyses the reaction 1,2-di-(9Z-octadecenoyl)-sn-glycero-3-phospho-1D-myo-inositol + H2O = 2-(9Z-octadecenoyl)-sn-glycero-3-phospho-1D-myo-inositol + (9Z)-octadecenoate + H(+). The catalysed reaction is 1-(9Z-octadecenoyl)-2-(8Z,11Z,14Z-eicosatrienoyl)-sn-glycero-3-phospho-1D-myo-inositol + H2O = 2-(8Z,11Z,14Z-eicosatrienoyl)-sn-glycero-3-phospho-1D-myo-inositol + (9Z)-octadecenoate + H(+). It carries out the reaction 1,2-di-(9Z-octadecenoyl)-sn-glycero-3-phosphocholine + H2O = (9Z-octadecenoyl)-sn-glycero-3-phosphocholine + (9Z)-octadecenoate + H(+). It functions in the pathway phospholipid metabolism; phosphatidylinositol metabolism. Its function is as follows. Phospholipase A1 (PLA1) that hydrolyzes ester bonds at the sn-1 position of glycerophospholipids producing a free fatty acid and a lysophospholipid. Prefers phosphatidate (1,2-diacyl-sn-glycero-3-phosphate, PA) as substrate in vitro, but can efficiently hydrolyze phosphatidylinositol (1,2-diacyl-sn-glycero-3-phospho-(1D-myo-inositol), PI), as well as a range of other glycerophospholipid substrates such as phosphatidylcholine (1,2-diacyl-sn-glycero-3-phosphocholine, PC), phosphatidylethanolamine (1,2-diacyl-sn-glycero-3-phosphoethanolamine, PE), phosphatidylserine (1,2-diacyl-sn-glycero-3-phospho-L-serine, PS) and phosphatidylglycerol (1,2-diacyl-sn-glycero-3-phospho-(1'-sn-glycerol), PG). Involved in the regulation of the endogenous content of polyunsaturated PI and PS lipids in the nervous system. Changes in these lipids extend to downstream metabolic products like PI phosphates PIP and PIP2, which play fundamental roles in cell biology. Regulates mitochondrial morphology. These dynamic changes may be due to PA hydrolysis at the mitochondrial surface. May play a regulatory role in spermatogenesis or sperm function. The protein is Phospholipase DDHD1 (DDHD1) of Bos taurus (Bovine).